The primary structure comprises 311 residues: Ribosomal RNA small subunit methyltransferase H (311 aa).

Residues 34 to 36 (GGY), D51, F75, D93, and Q100 contribute to the S-adenosyl-L-methionine site.

Belongs to the methyltransferase superfamily. RsmH family.

It localises to the cytoplasm. The enzyme catalyses cytidine(1402) in 16S rRNA + S-adenosyl-L-methionine = N(4)-methylcytidine(1402) in 16S rRNA + S-adenosyl-L-homocysteine + H(+). Functionally, specifically methylates the N4 position of cytidine in position 1402 (C1402) of 16S rRNA. The chain is Ribosomal RNA small subunit methyltransferase H from Caulobacter vibrioides (strain ATCC 19089 / CIP 103742 / CB 15) (Caulobacter crescentus).